The chain runs to 211 residues: Octanoyltransferase (211 aa).

Positions 32 to 211 (DHEPEIIYLV…IQTEFNKIFK (180 aa)) constitute a BPL/LPL catalytic domain. Substrate contacts are provided by residues 71 to 78 (RGGKFTFH), 145 to 147 (AIG), and 158 to 160 (GVA). C176 acts as the Acyl-thioester intermediate in catalysis.

Belongs to the LipB family.

The protein localises to the cytoplasm. The enzyme catalyses octanoyl-[ACP] + L-lysyl-[protein] = N(6)-octanoyl-L-lysyl-[protein] + holo-[ACP] + H(+). It participates in protein modification; protein lipoylation via endogenous pathway; protein N(6)-(lipoyl)lysine from octanoyl-[acyl-carrier-protein]: step 1/2. In terms of biological role, catalyzes the transfer of endogenously produced octanoic acid from octanoyl-acyl-carrier-protein onto the lipoyl domains of lipoate-dependent enzymes. Lipoyl-ACP can also act as a substrate although octanoyl-ACP is likely to be the physiological substrate. The protein is Octanoyltransferase of Rickettsia massiliae (strain Mtu5).